The chain runs to 261 residues: Putative diacylated glycolipid transporter LprF (261 aa).

Residues 1–38 (MNGLISQACGSHRPRRPSSLGAVAILIAATLFATVVAG) form the signal peptide. A lipid anchor (N-palmitoyl cysteine) is attached at Cys-39. Residue Cys-39 is the site of S-diacylglycerol cysteine attachment. A disordered region spans residues 42–61 (KPTTASSPSPGSPSPEAQQI).

Belongs to the LppX/LprAFG lipoprotein family. In terms of assembly, monomer. In terms of processing, modified by Lgt on Cys-39 with an S-linked diacylglycerol with a mixture of C16, C18 and C19 fatty acids (palmitic, stearic and tuberculostearic acid respectively), signal peptide is removed by LspA, modified by Lnt with an amide-linked mixture of C16 and C19 fatty acids.

It localises to the cell membrane. Its function is as follows. Might be involved in transporting short diacylated glycolipids to the cell outer membrane. Binds glycolipids that contain a diacylated glycerophosphate or a diacylated phosphatidylinositol moiety with C14 and C16 chains (upon overexpression in M.smegmatis; M.smegmatis does not encode this gene). Overexpression in M.smegmatis increases the cell wall glycolipid LAM/LM ratio (lipoarabinomannan/lipomannan), suggesting perhaps this protein is involved in the preferential translocation of diacylated LAM to the outer cell membrane. Overexpressing M.smegmatis cells adhere less well to hexadecane droplets, indicating decrease in the hydrophobicity of the cell surface, and have a slightly increased resistance to the antibiotic ethambutol. The polypeptide is Putative diacylated glycolipid transporter LprF (lprF) (Mycobacterium bovis (strain ATCC BAA-935 / AF2122/97)).